We begin with the raw amino-acid sequence, 249 residues long: MKTKPKSAYRRILLKLSGEALVGEEGFGIDPKVLDRMALEIKSLIEVGVQVGLVIGGGNIFRGAGLAEAGMNRVVGDHMGMLATVMNGLAMRDALQRSHVNSRLMSAIPLNGVCDDYNWAKAIRYLKQGTVVIFAAGTGNPFFTTDSAACLRGIEIEADAVLKGTKVDGVFDADPAKNPDAKLYKEIDYQLVLEKELKVMDLAAFTLARDHSLPIRVFNMNKPGALNRVVLGEDEGTTIKHCETIIEKE.

15-18 (KLSG) is an ATP binding site. Residues 23-28 (GEEGFG) form an involved in allosteric activation by GTP region. Gly57 contributes to the UMP binding site. Residues Gly58 and Arg62 each contribute to the ATP site. Residues Asp77 and 138–145 (TGNPFFTT) contribute to the UMP site. ATP-binding residues include Thr165, Phe171, and Asp174.

Belongs to the UMP kinase family. In terms of assembly, homohexamer.

The protein resides in the cytoplasm. The enzyme catalyses UMP + ATP = UDP + ADP. Its pathway is pyrimidine metabolism; CTP biosynthesis via de novo pathway; UDP from UMP (UMPK route): step 1/1. With respect to regulation, allosterically activated by GTP. Inhibited by UTP. Catalyzes the reversible phosphorylation of UMP to UDP. In Psychromonas ingrahamii (strain DSM 17664 / CCUG 51855 / 37), this protein is Uridylate kinase.